A 212-amino-acid polypeptide reads, in one-letter code: Ropporin-1B (212 aa).

The RIIa domain occupies 12 to 49 (PELPKMLKEFAKAAIRAQPQDLIQWGADYFEALSRGET). Ser56 is modified (phosphoserine). The interval 209–212 (VWLE) is interaction with RHPN1.

The protein belongs to the ropporin family. Homodimer. Interacts with RHPN1. May interact with SPA17. Interacts with AKAP3. Interacts with FSCB; the interaction increases upon spermatozoa capacitation conditions. In terms of processing, sumoylated, sumoylation decreases upon spermatozoa capacitation conditions.

The protein localises to the cell projection. It is found in the cilium. The protein resides in the flagellum. Its function is as follows. Important for male fertility. With ROPN1L, involved in fibrous sheath integrity and sperm motility, plays a role in PKA-dependent signaling processes required for spermatozoa capacitation. The sequence is that of Ropporin-1B (ROPN1B) from Homo sapiens (Human).